Reading from the N-terminus, the 43-residue chain is Neurotrophic factor BDNF (43 aa).

It belongs to the NGF-beta family.

The protein localises to the secreted. Its function is as follows. Promotes the survival of neuronal populations that are all located either in the central nervous system or directly connected to it. The polypeptide is Neurotrophic factor BDNF (BDNF) (Macrovipera lebetinus (Levantine viper)).